Reading from the N-terminus, the 322-residue chain is RNA-binding protein KhpB (322 aa).

Positions 3-52 (VFEGNTVAAAIAAGLKQLHRTRDQVEVEVIAEAKKGFLGLGKHPAQVRLT) are jag_N domain. The segment covering 58–82 (AAPATTPTSATATAQQSVATESTTA) has biased composition (low complexity). The segment at 58–162 (AAPATTPTSA…AADQSQTPRT (105 aa)) is disordered. A Phosphothreonine modification is found at Thr89. Residues 89–99 (TVQTPKSTPTR) show a composition bias toward polar residues. Over residues 100–129 (QAKTSQATTSAAKPATSKAKAVAKPASMAV) the composition is skewed to low complexity. A compositionally biased stretch (polar residues) spans 141–161 (SKPATTSKTKSVAADQSQTPR). In terms of domain architecture, KH spans 174–251 (ETAVRALCDY…ASHVNVVLDV (78 aa)). The region spanning 256–322 (ERRAATLKRL…HRAVVVAIRK (67 aa)) is the R3H domain.

In terms of assembly, forms a complex with KhpA.

The protein resides in the cytoplasm. In terms of biological role, a probable RNA chaperone. Forms a complex with KhpA which binds to cellular RNA and controls its expression. Plays a role in peptidoglycan (PG) homeostasis and cell length regulation. Functionally, necessary for correct cell elongation. The sequence is that of RNA-binding protein KhpB from Lactiplantibacillus plantarum (strain ATCC BAA-793 / NCIMB 8826 / WCFS1) (Lactobacillus plantarum).